We begin with the raw amino-acid sequence, 256 residues long: 5'-nucleotidase SurE (256 aa).

The a divalent metal cation site is built by D9, D10, S42, and N95.

The protein belongs to the SurE nucleotidase family. A divalent metal cation is required as a cofactor.

It localises to the cytoplasm. The catalysed reaction is a ribonucleoside 5'-phosphate + H2O = a ribonucleoside + phosphate. Nucleotidase that shows phosphatase activity on nucleoside 5'-monophosphates. This chain is 5'-nucleotidase SurE, found in Campylobacter curvus (strain 525.92).